A 469-amino-acid chain; its full sequence is Uronate isomerase (469 aa).

The protein belongs to the metallo-dependent hydrolases superfamily. Uronate isomerase family.

The catalysed reaction is D-glucuronate = D-fructuronate. The enzyme catalyses aldehydo-D-galacturonate = keto-D-tagaturonate. It participates in carbohydrate metabolism; pentose and glucuronate interconversion. This is Uronate isomerase from Rhizobium meliloti (strain 1021) (Ensifer meliloti).